Here is a 95-residue protein sequence, read N- to C-terminus: Aspartyl/glutamyl-tRNA(Asn/Gln) amidotransferase subunit C (95 aa).

It belongs to the GatC family. In terms of assembly, heterotrimer of A, B and C subunits.

The enzyme catalyses L-glutamyl-tRNA(Gln) + L-glutamine + ATP + H2O = L-glutaminyl-tRNA(Gln) + L-glutamate + ADP + phosphate + H(+). It catalyses the reaction L-aspartyl-tRNA(Asn) + L-glutamine + ATP + H2O = L-asparaginyl-tRNA(Asn) + L-glutamate + ADP + phosphate + 2 H(+). Allows the formation of correctly charged Asn-tRNA(Asn) or Gln-tRNA(Gln) through the transamidation of misacylated Asp-tRNA(Asn) or Glu-tRNA(Gln) in organisms which lack either or both of asparaginyl-tRNA or glutaminyl-tRNA synthetases. The reaction takes place in the presence of glutamine and ATP through an activated phospho-Asp-tRNA(Asn) or phospho-Glu-tRNA(Gln). The chain is Aspartyl/glutamyl-tRNA(Asn/Gln) amidotransferase subunit C from Marinobacter nauticus (strain ATCC 700491 / DSM 11845 / VT8) (Marinobacter aquaeolei).